Here is a 177-residue protein sequence, read N- to C-terminus: ATP synthase subunit delta (177 aa).

Belongs to the ATPase delta chain family. F-type ATPases have 2 components, F(1) - the catalytic core - and F(0) - the membrane proton channel. F(1) has five subunits: alpha(3), beta(3), gamma(1), delta(1), epsilon(1). F(0) has three main subunits: a(1), b(2) and c(10-14). The alpha and beta chains form an alternating ring which encloses part of the gamma chain. F(1) is attached to F(0) by a central stalk formed by the gamma and epsilon chains, while a peripheral stalk is formed by the delta and b chains.

The protein localises to the cell membrane. Functionally, f(1)F(0) ATP synthase produces ATP from ADP in the presence of a proton or sodium gradient. F-type ATPases consist of two structural domains, F(1) containing the extramembraneous catalytic core and F(0) containing the membrane proton channel, linked together by a central stalk and a peripheral stalk. During catalysis, ATP synthesis in the catalytic domain of F(1) is coupled via a rotary mechanism of the central stalk subunits to proton translocation. This protein is part of the stalk that links CF(0) to CF(1). It either transmits conformational changes from CF(0) to CF(1) or is implicated in proton conduction. This Macrococcus caseolyticus (strain JCSC5402) (Macrococcoides caseolyticum) protein is ATP synthase subunit delta.